A 601-amino-acid polypeptide reads, in one-letter code: Elongation factor 4 (601 aa).

One can recognise a tr-type G domain in the interval 7–189; it reads KNIRNFSIVA…AIVTRLPPPM (183 aa). Residues 19-24 and 136-139 contribute to the GTP site; these read DHGKST and NKVD.

The protein belongs to the TRAFAC class translation factor GTPase superfamily. Classic translation factor GTPase family. LepA subfamily.

It is found in the cell inner membrane. It carries out the reaction GTP + H2O = GDP + phosphate + H(+). In terms of biological role, required for accurate and efficient protein synthesis under certain stress conditions. May act as a fidelity factor of the translation reaction, by catalyzing a one-codon backward translocation of tRNAs on improperly translocated ribosomes. Back-translocation proceeds from a post-translocation (POST) complex to a pre-translocation (PRE) complex, thus giving elongation factor G a second chance to translocate the tRNAs correctly. Binds to ribosomes in a GTP-dependent manner. The protein is Elongation factor 4 of Xanthobacter autotrophicus (strain ATCC BAA-1158 / Py2).